Here is a 494-residue protein sequence, read N- to C-terminus: Lysine--tRNA ligase (494 aa).

Residues glutamate 407 and glutamate 414 each coordinate Mg(2+).

It belongs to the class-II aminoacyl-tRNA synthetase family. In terms of assembly, homodimer. Mg(2+) is required as a cofactor.

It is found in the cytoplasm. It catalyses the reaction tRNA(Lys) + L-lysine + ATP = L-lysyl-tRNA(Lys) + AMP + diphosphate. This Lactococcus lactis subsp. cremoris (strain SK11) protein is Lysine--tRNA ligase.